Here is a 439-residue protein sequence, read N- to C-terminus: MAGAMVSIVGRPNVGKSTLFNKIMGKRISIVEDKPGVTRDRIYGNAEWLDKKFILVDTGGLDPNAEDILFSKVRLQVEAAIDTSDVILFLVDAKEGLMPEDEEIANILRRAKKEVILVCNKVDSFKEMPPTYYDFFSLGLGNPIPISASNGLGIGELLDEVVKRLPQEELEYTEETIKIAVIGKPNVGKSSLVNKILGEERVIVSNIPGTTRDAIDTPFSKDGKNYVLIDTAGIRRKSRISESIERYSVLRALAAIERSDICLLMIDATEGPTEQDTKIAGYAFENGKGIIIVVNKWDAIKKDNNTVNEYTKMVREKLSFISFAPILFISAKTGQRVHRVLETVDKVWEEYNKRITTGLLNNVLNEAILMFPPPADKGKPLKVYYTSQVGIKPPSFVVFVNEPELMHFSYLRFIENTLRQNFGFEGVPIVISTKKRGEN.

EngA-type G domains are found at residues 4–169 (AMVS…PQEE) and 177–352 (IKIA…EEYN). GTP-binding positions include 10-17 (GRPNVGKS), 57-61 (DTGGL), 120-123 (NKVD), 183-190 (GKPNVGKS), 230-234 (DTAGI), and 295-298 (NKWD). In terms of domain architecture, KH-like spans 353–437 (KRITTGLLNN…PIVISTKKRG (85 aa)).

This sequence belongs to the TRAFAC class TrmE-Era-EngA-EngB-Septin-like GTPase superfamily. EngA (Der) GTPase family. As to quaternary structure, associates with the 50S ribosomal subunit.

Functionally, GTPase that plays an essential role in the late steps of ribosome biogenesis. In Thermoanaerobacter sp. (strain X514), this protein is GTPase Der.